The sequence spans 208 residues: Methylthioribulose-1-phosphate dehydratase (208 aa).

Zn(2+) is bound by residues His-99 and His-101.

It belongs to the aldolase class II family. MtnB subfamily. The cofactor is Zn(2+).

The enzyme catalyses 5-(methylsulfanyl)-D-ribulose 1-phosphate = 5-methylsulfanyl-2,3-dioxopentyl phosphate + H2O. The protein operates within amino-acid biosynthesis; L-methionine biosynthesis via salvage pathway; L-methionine from S-methyl-5-thio-alpha-D-ribose 1-phosphate: step 2/6. Its function is as follows. Catalyzes the dehydration of methylthioribulose-1-phosphate (MTRu-1-P) into 2,3-diketo-5-methylthiopentyl-1-phosphate (DK-MTP-1-P). The sequence is that of Methylthioribulose-1-phosphate dehydratase from Aquifex aeolicus (strain VF5).